The primary structure comprises 546 residues: MEDQEALGFEHMGLDPRLLQAVTDLGWSRPTLIQEKAIPLALEGKDLLARARTGSGKTAAYAIPMLQSLLHKKATGPVMEQAVRGLVLVPTKELARQAQAMIQQLAAYCARDVRVANVSAAEDSASQRAVLMEKPDVVVGTPSRVLSHLQQNTLKLRDSLELLVVDEADLLFSFGFEDELKSLLCHLPRIYQAFLMSATFNEDVQTLKELVLHNPVTLKLQESQLPGPDQLQQFQVVCETEEDKFLLLYALLKLSLIRGKALLFVNTLERGYRLRLFLEQFSIPSCVLNGELPLRSRCHIISQFNQGLYDCVIATDAEILGPQVKGKRRGRGSKGNKASDPESGVARGIDFHHVSAVLNFDLPPTAEAYVHRAGRTARANNPGIVLTFVLPAEQPFLGKIEDLLSGEGEAPILLPYQFQMEEIESFRYRCRDAMRSVTKQAIREARLKEIKEELLHSEKLKTYFEDNPRDLQLLRHDLPLHPAVVKPHLGHVPDYLVPAALRGLVHPRKKRRKVPFSRKAKKVKAQNPLRDFKHRGKKPKPAAKPS.

Residues Leu7–Glu35 carry the Q motif motif. Residues Ile38–Leu218 form the Helicase ATP-binding domain. Ala51–Thr58 is an ATP binding site. A Phosphoserine modification is found at Ser126. Thr141 carries the post-translational modification Phosphothreonine. The DEAD box signature appears at Asp166–Asp169. Residues Gln230 to Glu424 form the Helicase C-terminal domain. Disordered regions lie at residues Val324–Gly344 and Arg508–Ser546. Composition is skewed to basic residues over residues Lys325–Lys334, Arg508–Lys524, and Phe532–Ser546.

Belongs to the DEAD box helicase family. DDX56/DBP9 subfamily. As to quaternary structure, may form homooligomeric complexes. Interacts with IRF3. Interacts with OCT4 and POU5F1.

The protein localises to the nucleus. The protein resides in the nucleolus. The enzyme catalyses ATP + H2O = ADP + phosphate + H(+). In terms of biological role, nucleolar RNA helicase that plays a role in various biological processes including innate immunity, ribosome biogenesis or nucleolus organization. Plays an essential role in maintaining nucleolar integrity in planarian stem cells. Maintains embryonic stem cells proliferation by conventional regulation of ribosome assembly and interaction with OCT4 and POU5F1 complex. Regulates antiviral innate immunity by inhibiting the virus-triggered signaling nuclear translocation of IRF3. Mechanistically, acts by disrupting the interaction between IRF3 and importin IPO5. May play a role in later stages of the processing of the pre-ribosomal particles leading to mature 60S ribosomal subunits. Has intrinsic ATPase activity. The polypeptide is Probable ATP-dependent RNA helicase DDX56 (Ddx56) (Mus musculus (Mouse)).